A 110-amino-acid chain; its full sequence is METLAQHRQARSSAQKVRLIVDLIRGKKVPQALNILTYTNKKAAFLVKKVVESAVANAEHNDGADIDKLRIKKIFVNEGSTMKRMMPRAKGRADRILKRTSHITVIVSDR.

This sequence belongs to the universal ribosomal protein uL22 family. Part of the 50S ribosomal subunit.

Functionally, this protein binds specifically to 23S rRNA; its binding is stimulated by other ribosomal proteins, e.g. L4, L17, and L20. It is important during the early stages of 50S assembly. It makes multiple contacts with different domains of the 23S rRNA in the assembled 50S subunit and ribosome. In terms of biological role, the globular domain of the protein is located near the polypeptide exit tunnel on the outside of the subunit, while an extended beta-hairpin is found that lines the wall of the exit tunnel in the center of the 70S ribosome. This Buchnera aphidicola subsp. Acyrthosiphon pisum (strain 5A) protein is Large ribosomal subunit protein uL22.